Here is a 359-residue protein sequence, read N- to C-terminus: Popy class I histocompatibility antigen, alpha chain E (359 aa).

A signal peptide spans 1–18 (GTLLLLLSEALALTETWA). Positions 19–108 (GSHSLKYFHT…LRGYYNQTEA (90 aa)) are alpha-1. Topologically, residues 19–302 (GSHSLKYFHT…EPASQTTIPI (284 aa)) are extracellular. N-linked (GlcNAc...) asparagine glycosylation is present at asparagine 104. Residues 109-200 (GSHTLQWMHG…EKGKETLLHL (92 aa)) are alpha-2. Cystine bridges form between cysteine 119–cysteine 182 and cysteine 221–cysteine 277. An alpha-3 region spans residues 201-292 (DPPKTHVTHH…GLPEPLTLRW (92 aa)). The Ig-like C1-type domain occupies 203–291 (PKTHVTHHRI…EGLPEPLTLR (89 aa)). Residues 293–302 (EPASQTTIPI) form a connecting peptide region. A helical transmembrane segment spans residues 303 to 326 (VGIFAGLVLLGAVVTGATVVAAVM). Residues 327–359 (WRKKSSGGKGGSYSKAEWSDSAQGSESLTACKA) lie on the Cytoplasmic side of the membrane. The interval 330–359 (KSSGGKGGSYSKAEWSDSAQGSESLTACKA) is disordered. The span at 346-359 (DSAQGSESLTACKA) shows a compositional bias: polar residues. Serine 351 is subject to Phosphoserine.

This sequence belongs to the MHC class I family. As to quaternary structure, heterodimer of an alpha chain and a beta chain (beta-2-microglobulin).

The protein resides in the membrane. In terms of biological role, involved in the presentation of foreign antigens to the immune system. The chain is Popy class I histocompatibility antigen, alpha chain E (Popy-E) from Pongo pygmaeus (Bornean orangutan).